The following is a 332-amino-acid chain: RNA polymerase II holoenzyme cyclin-like subunit (332 aa).

The 102-residue stretch at 74–175 folds into the Cyclin N-terminal domain; the sequence is RIYCYFLIMK…LIEELQSYMI (102 aa).

Belongs to the cyclin family. Cyclin C subfamily. In terms of assembly, component of the SRB8-11 complex, a regulatory module of the Mediator complex.

The protein resides in the nucleus. Functionally, component of the SRB8-11 complex. The SRB8-11 complex is a regulatory module of the Mediator complex which is itself involved in regulation of basal and activated RNA polymerase II-dependent transcription. The SRB8-11 complex may be involved in the transcriptional repression of a subset of genes regulated by Mediator. It may inhibit the association of the Mediator complex with RNA polymerase II to form the holoenzyme complex. The SRB8-11 complex phosphorylates the C-terminal domain (CTD) of the largest subunit of RNA polymerase II. This is RNA polymerase II holoenzyme cyclin-like subunit (SSN8) from Eremothecium gossypii (strain ATCC 10895 / CBS 109.51 / FGSC 9923 / NRRL Y-1056) (Yeast).